The chain runs to 105 residues: Thioredoxin (105 aa).

The Thioredoxin domain maps to 2 to 105 (VKQIDSKDAF…KLEATINEFV (104 aa)). At Lys-3 the chain carries N6-acetyllysine. Lys-8 bears the N6-succinyllysine mark. Catalysis depends on nucleophile residues Cys-32 and Cys-35. Cys-32 and Cys-35 are disulfide-bonded. Residue Lys-39 is modified to N6-acetyllysine. Residues Cys-62 and Cys-69 each carry the S-nitrosocysteine modification. Cys-73 bears the S-nitrosocysteine; alternate mark. Residue Lys-94 is modified to N6-acetyllysine; alternate. An N6-succinyllysine; alternate modification is found at Lys-94.

The protein belongs to the thioredoxin family. As to quaternary structure, homodimer; disulfide-linked. Interacts with TXNIP through the redox-active site. Interacts with MAP3K5 and CASP3. Interacts with APEX1; the interaction stimulates the FOS/JUN AP-1 DNA-binding activity in a redox-dependent manner. Post-translationally, in the fully reduced protein, both Cys-69 and Cys-73 are nitrosylated in response to nitric oxide (NO). When two disulfide bonds are present in the protein, only Cys-73 is nitrosylated. Cys-73 can serve as donor for nitrosylation of target proteins.

The protein localises to the nucleus. It is found in the cytoplasm. The protein resides in the secreted. Its function is as follows. Participates in various redox reactions through the reversible oxidation of its active center dithiol to a disulfide and catalyzes dithiol-disulfide exchange reactions. Plays a role in the reversible S-nitrosylation of cysteine residues in target proteins, and thereby contributes to the response to intracellular nitric oxide. Nitrosylates the active site Cys of CASP3 in response to nitric oxide (NO), and thereby inhibits caspase-3 activity. Induces the FOS/JUN AP-1 DNA binding activity in ionizing radiation (IR) cells through its oxidation/reduction status and stimulates AP-1 transcriptional activity. The chain is Thioredoxin (TXN) from Callithrix jacchus (White-tufted-ear marmoset).